Here is a 458-residue protein sequence, read N- to C-terminus: MPN domain-containing protein (458 aa).

The segment at M1–R37 is disordered. The span at E14–D28 shows a compositional bias: acidic residues. The 96-residue stretch at T42–Y137 folds into the RAMA domain. DNA-binding residues include S94, S96, and W116. The tract at residues S147 to S175 is disordered. A compositionally biased stretch (acidic residues) spans E148–E161. One can recognise an MPN domain in the interval V229–V364. H306, H308, and D319 together coordinate Zn(2+). A JAMM motif motif is present at residues H306 to D319.

This sequence belongs to the peptidase M67 family. Degraded following binding to N(6)-methyladenosine methylated DNA (m6A).

Its function is as follows. Probable protease. Acts as a sensor of N(6)-methyladenosine methylation on DNA (m6A): recognizes and binds m6A DNA, leading to its degradation. Binds only double strand DNA (dsDNA) in a sequence-independent manner. This is MPN domain-containing protein from Danio rerio (Zebrafish).